Here is a 213-residue protein sequence, read N- to C-terminus: Large ribosomal subunit protein uL1 (213 aa).

The protein belongs to the universal ribosomal protein uL1 family. As to quaternary structure, part of the 50S ribosomal subunit.

Functionally, binds directly to 23S rRNA. Probably involved in E site tRNA release. Protein L1 is also a translational repressor protein, it controls the translation of its operon by binding to its mRNA. This Methanococcus maripaludis (strain DSM 14266 / JCM 13030 / NBRC 101832 / S2 / LL) protein is Large ribosomal subunit protein uL1.